A 148-amino-acid polypeptide reads, in one-letter code: UPF0756 membrane protein YeaL (148 aa).

Transmembrane regions (helical) follow at residues A14–V34, L51–L71, F80–G100, and V121–V141.

It belongs to the UPF0756 family.

The protein resides in the cell membrane. The chain is UPF0756 membrane protein YeaL from Escherichia fergusonii (strain ATCC 35469 / DSM 13698 / CCUG 18766 / IAM 14443 / JCM 21226 / LMG 7866 / NBRC 102419 / NCTC 12128 / CDC 0568-73).